A 178-amino-acid chain; its full sequence is NAD(P)H-quinone oxidoreductase subunit 6, chloroplastic (178 aa).

Helical transmembrane passes span 10–30, 32–52, 61–81, 94–114, and 154–174; these read FILV…VLFT, PIYS…FYIL, AQLL…VMFM, LWTI…FSLI, and FFLP…GAIA.

This sequence belongs to the complex I subunit 6 family. In terms of assembly, NDH is composed of at least 16 different subunits, 5 of which are encoded in the nucleus.

Its subcellular location is the plastid. It is found in the chloroplast thylakoid membrane. It carries out the reaction a plastoquinone + NADH + (n+1) H(+)(in) = a plastoquinol + NAD(+) + n H(+)(out). It catalyses the reaction a plastoquinone + NADPH + (n+1) H(+)(in) = a plastoquinol + NADP(+) + n H(+)(out). Its function is as follows. NDH shuttles electrons from NAD(P)H:plastoquinone, via FMN and iron-sulfur (Fe-S) centers, to quinones in the photosynthetic chain and possibly in a chloroplast respiratory chain. The immediate electron acceptor for the enzyme in this species is believed to be plastoquinone. Couples the redox reaction to proton translocation, and thus conserves the redox energy in a proton gradient. The polypeptide is NAD(P)H-quinone oxidoreductase subunit 6, chloroplastic (ndhG) (Citrus sinensis (Sweet orange)).